The primary structure comprises 378 residues: D-alanine--D-alanine ligase (378 aa).

In terms of domain architecture, ATP-grasp spans 157–368; the sequence is KVVFESAGLS…YGDLIDELIH (212 aa). An ATP-binding site is contributed by 189-244; that stretch reads VDKLGFPVFVKPARAGSSMGISKVDSMEGLDAAIDEARRHDLKLVIEAGIVGREIE. Mg(2+) is bound by residues Asp322, Glu335, and Asn337.

The protein belongs to the D-alanine--D-alanine ligase family. Mg(2+) serves as cofactor. Mn(2+) is required as a cofactor.

The protein resides in the cytoplasm. The enzyme catalyses 2 D-alanine + ATP = D-alanyl-D-alanine + ADP + phosphate + H(+). Its pathway is cell wall biogenesis; peptidoglycan biosynthesis. Functionally, cell wall formation. This chain is D-alanine--D-alanine ligase, found in Paenarthrobacter aurescens (strain TC1).